Consider the following 173-residue polypeptide: Large ribosomal subunit protein bL9 (173 aa).

Residues 150–173 (KQEDKKSLSKKLNKADEQGERAEV) form a disordered region.

The protein belongs to the bacterial ribosomal protein bL9 family.

Functionally, binds to the 23S rRNA. This chain is Large ribosomal subunit protein bL9, found in Borreliella burgdorferi (strain ZS7) (Borrelia burgdorferi).